A 241-amino-acid polypeptide reads, in one-letter code: Chalcone--flavanone isomerase C (241 aa).

Residues Thr50, Asn115, and Ser192 each contribute to the substrate site.

This sequence belongs to the chalcone isomerase family.

It carries out the reaction a chalcone = a flavanone.. The protein operates within secondary metabolite biosynthesis; flavonoid biosynthesis. In terms of biological role, catalyzes the intramolecular cyclization of bicyclic chalcones into tricyclic (S)-flavanones. Responsible for the isomerization of 4,2',4',6'-tetrahydroxychalcone (also termed chalcone) into naringenin. This chain is Chalcone--flavanone isomerase C (CHI3), found in Petunia hybrida (Petunia).